Reading from the N-terminus, the 460-residue chain is A-type ATP synthase subunit B (460 aa).

It belongs to the ATPase alpha/beta chains family. As to quaternary structure, has multiple subunits with at least A(3), B(3), C, D, E, F, H, I and proteolipid K(x).

It is found in the cell membrane. Functionally, component of the A-type ATP synthase that produces ATP from ADP in the presence of a proton gradient across the membrane. The B chain is a regulatory subunit. The sequence is that of A-type ATP synthase subunit B from Methanosarcina barkeri.